We begin with the raw amino-acid sequence, 575 residues long: Cyclic nucleotide-gated channel alpha-4 (575 aa).

Topologically, residues 1–38 (MSQDSKVKTTESTPPAPTKARKWLPVLDPSGDYYYWWL) are cytoplasmic. A helical membrane pass occupies residues 39–60 (NTMVFPIMYNLIIVVCRACFPD). Residues 61-70 (LQHSYLVAWF) are Extracellular-facing. Residues 71–91 (VLDYTSDLLYLLDIGVRFHTG) traverse the membrane as a helical segment. At 92–116 (FLEQGILVVDKSMIASRYVRTWSFL) the chain is on the cytoplasmic side. Residues 117–135 (LDLASLVPTDAAYVQLGPH) form a helical membrane-spanning segment. Over 136–140 (IPTLR) the chain is Extracellular. The helical transmembrane segment at 141–159 (LNRFLRVPRLFEAFDRTET) threads the bilayer. The Cytoplasmic portion of the chain corresponds to 160-166 (RTAYPNA). Residues 164–272 (PNAFRIAKLM…GSMSSVIYNM (109 aa)) are ion conduction pathway. A helical membrane pass occupies residues 167 to 190 (FRIAKLMIYIFVVIHWNSCLYFAL). The Extracellular segment spans residues 191–213 (SRYLGFGRDAWVYPDPAQPGFER). 2 helical membrane-spanning segments follow: residues 214–248 (LRRQYLYSFYFSTLILTTVGDTPLPAREEEYLFMV) and 249–273 (GDFLLAVMGFATIMGSMSSVIYNMN). The tract at residues 231–234 (TVGD) is selectivity filter. A C-linker region spans residues 274-350 (TADAAFYPDH…STLSRVQIFQ (77 aa)). Over 274-575 (TADAAFYPDH…AGQEGPSGLE (302 aa)) the chain is Cytoplasmic. The short motif at 292–302 (LQHVNRRLERR) is the IQ-type element. Residue 348 to 471 (IFQNCEASLL…AVMEEKGREI (124 aa)) participates in a nucleoside 3',5'-cyclic phosphate binding. Positions 354 to 474 (ASLLEELVLK…EEKGREILLK (121 aa)) are cyclic nucleotide-binding domain. 3',5'-cyclic GMP contacts are provided by glycine 414, serine 417, arginine 430, and threonine 431. Residues arginine 430 and threonine 431 each coordinate 3',5'-cyclic AMP. The stretch at 493 to 547 (TESRLKGLDQQLDDLQTKFARLLAELESSALKIAYRIERLEWQTREWPMPDDMGE) forms a coiled coil. Positions 536–575 (TREWPMPDDMGEADDEAEPGEGTSKDGEEKAGQEGPSGLE) are disordered. A compositionally biased stretch (acidic residues) spans 544–554 (DMGEADDEAEP). Positions 558–567 (TSKDGEEKAG) are enriched in basic and acidic residues.

The protein belongs to the cyclic nucleotide-gated cation channel (TC 1.A.1.5) family. CNGA4 subfamily. In terms of assembly, the olfactory cyclic nucleotide-gated channel is an heterotetramer composed of CNGA2, CNGA4 and CNGB1b subunits with 2:1:1 stoichiometry. As to expression, expressed in the olfactory epithelium.

It is found in the cell projection. It localises to the cilium membrane. It carries out the reaction Ca(2+)(in) = Ca(2+)(out). The enzyme catalyses Na(+)(in) = Na(+)(out). It catalyses the reaction K(+)(in) = K(+)(out). The catalysed reaction is NH4(+)(in) = NH4(+)(out). It carries out the reaction Rb(+)(in) = Rb(+)(out). The enzyme catalyses Li(+)(in) = Li(+)(out). It catalyses the reaction Cs(+)(in) = Cs(+)(out). Ca(2+)-calmodulin exerts its inhibitory effect in cAMP sensitivity by binding to IQ-like motif of CNGA4 and preferably binds to the channel in the closed state. Inhibition by PIP3 of the CNG channel probably occurs via CGNA2 binding. Functionally, pore-forming subunit of the olfactory cyclic nucleotide-gated channel. Operates in the cilia of olfactory sensory neurons where chemical stimulation of the odorant is converted to an electrical signal. Mediates odorant-induced cAMP-dependent Ca(2+) influx triggering neuron depolarization. The rise of intracellular Ca(2+) levels potentiates the olfactory response by activating Ca(2+)-dependent Cl(-) channels, but it also serves as a negative feedback signal to desensitize the channel for rapid adaptation to odorants. Conducts cGMP- and cAMP-gated ion currents, with permeability for monovalent and divalent cations. Conducts cAMP- and cGMP-gated ion currents, with permeability for monovalent and divalent cations. May conduct nitric oxide-gated Ca(2+) currents relevant to neurons of vomeronasal organ, a system involved in the perception of pheromones. This Mus musculus (Mouse) protein is Cyclic nucleotide-gated channel alpha-4.